We begin with the raw amino-acid sequence, 668 residues long: MSDLKIALTHADAREERTVTTGTKAWELFQDDPSVIAARVNGALRDLAHELADGDQVEPVAIDSPDGHDILRHSTAHVMAQAVQQLFPDAKLGIGPPVENGFYYDFDVDTPFNPADLDKIETAMRKIIKEGQRFSRRVTTDADAISELRDEPYKIELIGLKGSGASTGSTTEAVEGASVEVGAGELTIYDNIRRNGDVAWSDLCRGPHLPTTKRIPAFKLMRTAAAYWRGNEKNKQLQRIYGTAWESKDALEEHLHRIEEAERRDHRKLGRDLDLFSFPDEIGSGLPVFHPKGGVIKRVMEDYVRQRHVEEGFEYVGTPHIAKEGLFYTSGHLPYYGEAMFPPLDVDGMDYRLKAMNCPMHNLIFRSRQRSYRELPLRLFEFGHVYRHEKSGVIHGLTRVRGFAQDDSHSYVTKEQAPAEIKHLLDFCLGLFRDFGLDDFYLELSTRDDSKPDKFIGSDEDWAVATKVLEDVCIASGLELVPDPGGAAYYGPKVSVQARDAIGRTWQMSTIQYDFNQPSADRFDLHYTAADGSRQQPVMIHSAKFGSIERFIGVLVEHYAGAFPPWLAPVQVQAIPIAERHNDYLYDVAKRMQAQGLRVEVDDSDDRMQKKIRNAQLLKVPFMMIAGDDDVAAGAVSFRYRDGRQDNGVPLDEAIRRVADAVASREQV.

The 61-residue stretch at 1-61 folds into the TGS domain; sequence MSDLKIALTH…ADGDQVEPVA (61 aa). The tract at residues 265–564 is catalytic; sequence DHRKLGRDLD…LVEHYAGAFP (300 aa). Residues cysteine 358, histidine 409, and histidine 541 each coordinate Zn(2+).

Belongs to the class-II aminoacyl-tRNA synthetase family. Homodimer. Zn(2+) serves as cofactor.

Its subcellular location is the cytoplasm. It catalyses the reaction tRNA(Thr) + L-threonine + ATP = L-threonyl-tRNA(Thr) + AMP + diphosphate + H(+). In terms of biological role, catalyzes the attachment of threonine to tRNA(Thr) in a two-step reaction: L-threonine is first activated by ATP to form Thr-AMP and then transferred to the acceptor end of tRNA(Thr). Also edits incorrectly charged L-seryl-tRNA(Thr). This is Threonine--tRNA ligase from Nocardioides sp. (strain ATCC BAA-499 / JS614).